We begin with the raw amino-acid sequence, 635 residues long: Biosynthetic arginine decarboxylase (635 aa).

At lysine 100 the chain carries N6-(pyridoxal phosphate)lysine. 282 to 292 (VDIGGGLGVDY) lines the substrate pocket.

It belongs to the Orn/Lys/Arg decarboxylase class-II family. SpeA subfamily. It depends on Mg(2+) as a cofactor. Requires pyridoxal 5'-phosphate as cofactor.

It carries out the reaction L-arginine + H(+) = agmatine + CO2. Its pathway is amine and polyamine biosynthesis; agmatine biosynthesis; agmatine from L-arginine: step 1/1. Catalyzes the biosynthesis of agmatine from arginine. In Geotalea daltonii (strain DSM 22248 / JCM 15807 / FRC-32) (Geobacter daltonii), this protein is Biosynthetic arginine decarboxylase.